A 309-amino-acid polypeptide reads, in one-letter code: MFQVQCLESAQKAATENVAKFCIEPLSKGQGITIGNALRRTLLSNIPGTAIVGTRISGVDHEFSVIPGVKEDALEILLNLKQLVFKGNLNEPIITRLNIQGPCIVTAGDIDIPTDLELIDPQQYIATITDFSHLEMEFILEQGESYVLSEKTASNNPRGFLAVDAVFTPIKKVNFFVETSSSKERLEKERLIIEIETNGSILPLEALNLAAERLSSLFKLVNSADLTAEFPTEVENIVQVSQTDVTGVLIEELELSVRAYNCLKRAQIHTLGELLKYSKENLLEFKNFGQKSANEVCENLHERFNLTLN.

The segment at 1–225 (MFQVQCLESA…SLFKLVNSAD (225 aa)) is alpha N-terminal domain (alpha-NTD). Residues 237-309 (IVQVSQTDVT…LHERFNLTLN (73 aa)) are alpha C-terminal domain (alpha-CTD).

It belongs to the RNA polymerase alpha chain family. In plastids the minimal PEP RNA polymerase catalytic core is composed of four subunits: alpha, beta, beta', and beta''. When a (nuclear-encoded) sigma factor is associated with the core the holoenzyme is formed, which can initiate transcription.

It localises to the plastid. The protein resides in the chloroplast. It catalyses the reaction RNA(n) + a ribonucleoside 5'-triphosphate = RNA(n+1) + diphosphate. In terms of biological role, DNA-dependent RNA polymerase catalyzes the transcription of DNA into RNA using the four ribonucleoside triphosphates as substrates. The polypeptide is DNA-directed RNA polymerase subunit alpha (Emiliania huxleyi (Coccolithophore)).